The chain runs to 151 residues: Large ribosomal subunit protein uL13 (151 aa).

Belongs to the universal ribosomal protein uL13 family. As to quaternary structure, part of the 50S ribosomal subunit.

Functionally, this protein is one of the early assembly proteins of the 50S ribosomal subunit, although it is not seen to bind rRNA by itself. It is important during the early stages of 50S assembly. The polypeptide is Large ribosomal subunit protein uL13 (Rippkaea orientalis (strain PCC 8801 / RF-1) (Cyanothece sp. (strain PCC 8801))).